We begin with the raw amino-acid sequence, 525 residues long: Phosphatidylinositol 4-kinase alpha 2 (525 aa).

Positions 163–278 (SDVRQHIVDG…VKPQACIFKV (116 aa)) are pleckstrin homology (PH) domain conferring phosphoinositide binding specificity. In terms of domain architecture, PI3K/PI4K catalytic spans 239 to 509 (VDSGIPLQSA…VCTDAYNKWT (271 aa)). The segment at 245 to 251 (LQSAAKV) is G-loop. Positions 373–381 (QPKDRHNGN) are catalytic loop. The activation loop stretch occupies residues 392–417 (HIDFGFILETSPGGNMRFENAHFKLS).

The protein belongs to the PI3/PI4-kinase family. Type III PI4K subfamily.

Its subcellular location is the membrane. The catalysed reaction is a 1,2-diacyl-sn-glycero-3-phospho-(1D-myo-inositol) + ATP = a 1,2-diacyl-sn-glycero-3-phospho-(1D-myo-inositol 4-phosphate) + ADP + H(+). Its function is as follows. Acts on phosphatidylinositol (PtdIns) in the first committed step in the production of the second messenger inositol-1,4,5,-trisphosphate. The chain is Phosphatidylinositol 4-kinase alpha 2 (PI4KA2) from Arabidopsis thaliana (Mouse-ear cress).